The chain runs to 786 residues: MNEKSLRILEFYKVKDELKKYTNTNAAKDLVDNLKPYDNIHDVREHLEETEEALKLIISRGNPPFDGVYDVRQGVKMAQKGSILMPAQIFRIGAILKASRRFEKYIKAKGEGEGFRIIEDICQGIVLLKGLEDKIFISIESEDEISDRASSLLYNIRKSIRDKNASVRDKVNSLIRNYSSYLQDNLYTIRGDRYVLPVRAENKALVPGLVHDQSSSGSTLYIEPMALVNLNNEIKELKLKEKAEIDRILYELSKEIHDNIVVIKNNADIIWELDFIFAKAKFGSELNGNIPIVNDNCIIDIVEGRHPLIDRKTVVPMDVYMGKDFTCLVITGPNTGGKTVALKTMGLLHIMALSGLMIPARENSTVGFFTEIFADIGDEQSIEQNLSTFSSHMTNIINIINNSDEKSLILFDELGAGTDPTEGAALAVSILENLKDRGSMIVATTHYSELKAYALKSNGVENASVEFDVDTLKPTYKLMIGIPGKSNAFEISKRLGLPEFIIKAARENIASEALKFEDLIQSLQEKRIKAENYFREAEILKREAAKIKEKYEQKAIRLQEVRDKSITEAHRKAREIIRESKEEADRILKDIRELEKMGYSSSVKHELEERRKMLKDKLENVEENLYKAKSEDGQRLKSVKEGEEVFIPSLNQKVLVLSKPDNKGEVQVQAGIMKISVNLKELRAPKGSTKNTDKKLKREANLNLRSVATSVDLRGMDSIEAAYITDKYLDDAYVAGLKEVTIIHGKGTGILRSSITNMLKSHSHVKNYRIGEYGEGGTGVTIVELK.

332 to 339 is a binding site for ATP; sequence GPNTGGKT. The Smr domain maps to 711–786; it reads VDLRGMDSIE…GTGVTIVELK (76 aa).

The protein belongs to the DNA mismatch repair MutS family. MutS2 subfamily. As to quaternary structure, homodimer. Binds to stalled ribosomes, contacting rRNA.

Functionally, endonuclease that is involved in the suppression of homologous recombination and thus may have a key role in the control of bacterial genetic diversity. Acts as a ribosome collision sensor, splitting the ribosome into its 2 subunits. Detects stalled/collided 70S ribosomes which it binds and splits by an ATP-hydrolysis driven conformational change. Acts upstream of the ribosome quality control system (RQC), a ribosome-associated complex that mediates the extraction of incompletely synthesized nascent chains from stalled ribosomes and their subsequent degradation. Probably generates substrates for RQC. The polypeptide is Endonuclease MutS2 (Clostridium kluyveri (strain NBRC 12016)).